A 375-amino-acid polypeptide reads, in one-letter code: Chaperone protein DnaJ (375 aa).

Positions 4–68 (DYYEVLGVGK…QKRAQYDRFG (65 aa)) constitute a J domain. A CR-type zinc finger spans residues 129–211 (GKETDVEIPK…CRGSGRVKVR (83 aa)). Positions 142, 145, 159, 162, 185, 188, 199, and 202 each coordinate Zn(2+). 4 CXXCXGXG motif repeats span residues 142-149 (CDTCHGSG), 159-166 (CKTCSGTG), 185-192 (CTTCEGKG), and 199-206 (CSSCRGSG). The interval 349-375 (LSGEKPGQHGGEDEGFFEKMKRAFRGE) is disordered.

Belongs to the DnaJ family. In terms of assembly, homodimer. Zn(2+) is required as a cofactor.

It localises to the cytoplasm. Participates actively in the response to hyperosmotic and heat shock by preventing the aggregation of stress-denatured proteins and by disaggregating proteins, also in an autonomous, DnaK-independent fashion. Unfolded proteins bind initially to DnaJ; upon interaction with the DnaJ-bound protein, DnaK hydrolyzes its bound ATP, resulting in the formation of a stable complex. GrpE releases ADP from DnaK; ATP binding to DnaK triggers the release of the substrate protein, thus completing the reaction cycle. Several rounds of ATP-dependent interactions between DnaJ, DnaK and GrpE are required for fully efficient folding. Also involved, together with DnaK and GrpE, in the DNA replication of plasmids through activation of initiation proteins. The chain is Chaperone protein DnaJ from Brevibacillus choshinensis.